The following is a 498-amino-acid chain: NAD(P)H-quinone oxidoreductase chain 4, chloroplastic (498 aa).

Helical transmembrane passes span 4 to 24 (FPWL…IFLF), 31 to 51 (VIKW…SYVF), 76 to 96 (FYWS…TGFI), 113 to 130 (LFYF…GTFS), 134 to 154 (ILLF…LLSM), 167 to 187 (FILY…GMSF), 208 to 228 (ALEI…SPII), 242 to 262 (HYST…YGLV), 272 to 292 (AHSI…IYAA), 305 to 325 (IAYS…SISD), 330 to 350 (GAIL…FLAG), 386 to 406 (LALP…GIIT), 411 to 431 (LLIT…LTPI), and 463 to 483 (FISI…DFIF).

This sequence belongs to the complex I subunit 4 family.

The protein localises to the plastid. It is found in the chloroplast thylakoid membrane. The catalysed reaction is a plastoquinone + NADH + (n+1) H(+)(in) = a plastoquinol + NAD(+) + n H(+)(out). It catalyses the reaction a plastoquinone + NADPH + (n+1) H(+)(in) = a plastoquinol + NADP(+) + n H(+)(out). This is NAD(P)H-quinone oxidoreductase chain 4, chloroplastic from Glycine max (Soybean).